The primary structure comprises 106 residues: EspC protein homolog (106 aa).

It belongs to the EspC family.

This Mycobacterium leprae (strain TN) protein is EspC protein homolog.